A 126-amino-acid polypeptide reads, in one-letter code: Protein Wnt-7(II) (126 aa).

A lipid anchor (O-palmitoleoyl serine; by PORCN) is attached at serine 1. A disulfide bridge connects residues cysteine 92 and cysteine 107. N-linked (GlcNAc...) asparagine glycosylation occurs at asparagine 93.

It belongs to the Wnt family. In terms of processing, palmitoleoylation is required for efficient binding to frizzled receptors. Depalmitoleoylation leads to Wnt signaling pathway inhibition.

It localises to the secreted. The protein resides in the extracellular space. The protein localises to the extracellular matrix. In terms of biological role, ligand for members of the frizzled family of seven transmembrane receptors. Probable developmental protein. May be a signaling molecule which affects the development of discrete regions of tissues. Is likely to signal over only few cell diameters. The chain is Protein Wnt-7(II) (WNT-7(II)) from Eptatretus stoutii (Pacific hagfish).